Consider the following 131-residue polypeptide: Small ribosomal subunit protein uS8 (131 aa).

This sequence belongs to the universal ribosomal protein uS8 family. In terms of assembly, part of the 30S ribosomal subunit. Contacts proteins S5 and S12.

Its function is as follows. One of the primary rRNA binding proteins, it binds directly to 16S rRNA central domain where it helps coordinate assembly of the platform of the 30S subunit. In Pelodictyon phaeoclathratiforme (strain DSM 5477 / BU-1), this protein is Small ribosomal subunit protein uS8.